Here is a 177-residue protein sequence, read N- to C-terminus: Matrix protein (177 aa).

Homomultimer. Interacts with nucleoprotein and with the cytoplasmic domain of glycoprotein.

It localises to the virion membrane. It is found in the host endomembrane system. In terms of biological role, plays a major role in assembly and budding of virion. Completely covers the ribonucleoprotein coil and keep it in condensed bullet-shaped form. Inhibits viral transcription and stimulates replication. The sequence is that of Matrix protein (M) from Lettuce necrotic yellows virus (isolate 318) (LNYV).